Reading from the N-terminus, the 751-residue chain is MADQAQDVRPTEWGPGKTPQGRARLPSSRPREKPQLSCNLCRRRKLRCDRQRPCSSCAQRELGLSCTYASDRVLSNGVAHQTRTTTQDRIRHLESLVYDLMQNSSANVNAQDQVGATPSPRGQPRGPDYPTPAAVHAPSTNEEPVSAAVSPADYGSMQSTGGGANYVGSAHWAAVLDGIAELKDHLDNEESHHSDSQGVDPPCPQVTGPQLLYGCPKPADKDEILSSIPARSVVDRLVSRYFNSFEMSPAVLHSVQFLKEYEAFWEDPQTTSPIWLGLLFTIMCLATQFEKSRLDPGVQSPAVLSMERELQEMVDTFRLRIPQCLVLGSYAKGGPFVLETLMLYIAAEIFLSSDAEIEIWILMGNTVQLALHMGYHRDPKHFKGLSPFAAEMRRRIWATIVEMDLGLSAQMGLPRMVKHWQTDTQEPSNLQDSDFDSATVEMPPSRLNTDLTPILYRLVKARLMTTIGYIWDFSADVRPYPYTEVQKMDDKLDLARKSIPECLKWHSMARNITDSPQHIMQKVILETVFYRAKIVLHRKYMFLPLAQSASSRRIVLESALKLLDYQHMLQEETQPFCQLYQERWRVSSLVNHDFLLATSILCYYLQHAWGATQRVSESDSFDETIMASLRRSHDIWLQSSNSSKEARKVVRALAVVLGRVNTPSADSVGEAGLVFGLPSTYPPSTTNDYSQETPGGLGSQFPMFNSALMPNWATFADDLISAPMITPTAEWQEMDETVDAMGSLNWPWNLQ.

Residues 1-35 (MADQAQDVRPTEWGPGKTPQGRARLPSSRPREKPQ) are disordered. The segment at residues 38–66 (CNLCRRRKLRCDRQRPCSSCAQRELGLSC) is a DNA-binding region (zn(2)-C6 fungal-type). Positions 107–116 (NVNAQDQVGA) are enriched in polar residues. A disordered region spans residues 107-153 (NVNAQDQVGATPSPRGQPRGPDYPTPAAVHAPSTNEEPVSAAVSPAD).

The protein localises to the nucleus. In terms of biological role, transcription factor that regulates the expression of the gene cluster that mediates the biosynthesis of fusarisetin A. The chain is Fusarisetin A cluster transcription factor fsa6 from Fusarium sp. (strain FN080326).